The primary structure comprises 506 residues: Protein P7 (506 aa).

RNA-binding regions lie at residues 128-249 and 325-355; these read ISYL…GKRE and DGSY…FKIS.

It belongs to the phytoreovirus protein P7 family.

The protein localises to the virion. Its subcellular location is the host cytoplasm. In terms of biological role, probable component of the transcriptional machinery present in the inner capsid. Displays dsRNA binding activity and may play an important role in the sorting of viral RNA and virion assembly. Together with the RNA-directed RNA polymerase P1 and capping enzyme P5, forms an transcriptional complex positioned near the channels situated at each of the five-fold vertices of the core. This is Protein P7 from Alopecurus aequalis (Barnyard grass).